Here is a 525-residue protein sequence, read N- to C-terminus: MYGLEKLGINNVTAAHYNLSPAQLVEKALANNEGILSDTGAFVISTGKYTGRAPDDKFFVDTPEVHKYIDWSRNQPIEKEKFDAIFGKLVAYLQNREIFIFDGRAGANPEYTRRFRVINELASQNLFIHQLLIRTDEEYNENNDIDFTIISAPNFHCVPEIDGVNSEAAIIINFEKKIAIICATKYSGEIKKSVFSIMNYIMPHENILPMHCSANMDPVTHETAIFFGLSGTGKTTLSADPNRKLIGDDEHGWCDKGIFNFEGGCYAKCINLKEESEPEIYRAIKFGSLVENVVVDPITRKIQYEDASITPNTRVGYPIDYIPNAELSGVGGIPKVVIFLTADSFGVLPPISRLSQEAAMYHFVTGFTAKLAGTELGVKEPVPTFSTCFGEPFMPMDPSVYAEMLGERLKKHNTKVYLINTGWSGGAYGTGKRINLKYTRAMVTAVLNGYFDNAEYKHDDIFNLDIPQSCPGVPSEIMNPIDTWQDRDKYIIAAKKLANLFYNNFKEKYPNMPENITNAGPKYND.

Residues R52, Y186, and K192 each contribute to the substrate site. Residues K192, H211, and 228 to 236 (GLSGTGKTT) contribute to the ATP site. Mn(2+) is bound by residues K192 and H211. A Mn(2+)-binding site is contributed by D249. ATP is bound by residues E277, R314, 433–434 (RI), and T439. Substrate is bound at residue R314.

The protein belongs to the phosphoenolpyruvate carboxykinase (ATP) family. It depends on Mn(2+) as a cofactor.

It is found in the cytoplasm. It catalyses the reaction oxaloacetate + ATP = phosphoenolpyruvate + ADP + CO2. It functions in the pathway carbohydrate biosynthesis; gluconeogenesis. Its function is as follows. Involved in the gluconeogenesis. Catalyzes the conversion of oxaloacetate (OAA) to phosphoenolpyruvate (PEP) through direct phosphoryl transfer between the nucleoside triphosphate and OAA. The polypeptide is Phosphoenolpyruvate carboxykinase (ATP) (Fusobacterium nucleatum subsp. nucleatum (strain ATCC 25586 / DSM 15643 / BCRC 10681 / CIP 101130 / JCM 8532 / KCTC 2640 / LMG 13131 / VPI 4355)).